Here is a 56-residue protein sequence, read N- to C-terminus: Large ribosomal subunit protein bL33 (56 aa).

This sequence belongs to the bacterial ribosomal protein bL33 family.

This chain is Large ribosomal subunit protein bL33, found in Anaplasma marginale (strain Florida).